The chain runs to 311 residues: Methionyl-tRNA formyltransferase (311 aa).

Position 110-113 (110-113) interacts with (6S)-5,6,7,8-tetrahydrofolate; the sequence is SLLP.

This sequence belongs to the Fmt family.

The catalysed reaction is L-methionyl-tRNA(fMet) + (6R)-10-formyltetrahydrofolate = N-formyl-L-methionyl-tRNA(fMet) + (6S)-5,6,7,8-tetrahydrofolate + H(+). In terms of biological role, attaches a formyl group to the free amino group of methionyl-tRNA(fMet). The formyl group appears to play a dual role in the initiator identity of N-formylmethionyl-tRNA by promoting its recognition by IF2 and preventing the misappropriation of this tRNA by the elongation apparatus. The protein is Methionyl-tRNA formyltransferase of Streptococcus pyogenes serotype M6 (strain ATCC BAA-946 / MGAS10394).